The following is a 492-amino-acid chain: Phosphatidylinositol-glycan biosynthesis class W protein (492 aa).

Transmembrane regions (helical) follow at residues 26-46, 59-79, 82-102, 127-147, and 156-176; these read FILTLMPISVLFQRVVFATFF, FILEFFFIIVPFISAITFTEL, FLIVGMLITCLVVPMFAQKNV, YRAFVMAATCICILAVDFQVF, and TYGISLMDIGVGSVVLSGALV. Positions 185 to 216 are disordered; it reads IEKQQKKKREEEEDDNDKINKTSSSSSSSSSA. Asn204 carries an N-linked (GlcNAc...) asparagine glycan. A compositionally biased stretch (low complexity) spans 205-216; the sequence is KTSSSSSSSSSA. The chain crosses the membrane as a helical span at residues 264–284; that stretch reads YGLHWNFFFTLGFVSISLAFL. A glycan (N-linked (GlcNAc...) asparagine) is linked at Asn289. 4 helical membrane-spanning segments follow: residues 290 to 310, 331 to 351, 364 to 384, and 399 to 419; these read ISAILGVVLICVYQFLLNSFG, ICSFVGYLAIYLIGTKIGTEL, FATKLLISSIVFYILWILCEI, and VLAILSINLFNFSINILITLI. N-linked (GlcNAc...) asparagine glycosylation is present at Asn424. A run of 2 helical transmembrane segments spans residues 437 to 457 and 464 to 484; these read LFIFLLGNILTGLINFSMKTI and SMIIITSYTFALCLLAFILDY.

It belongs to the PIGW family.

It localises to the endoplasmic reticulum membrane. The protein operates within glycolipid biosynthesis; glycosylphosphatidylinositol-anchor biosynthesis. Functionally, probable acetyltransferase, which acetylates the inositol ring of phosphatidylinositol during biosynthesis of GPI-anchor. The chain is Phosphatidylinositol-glycan biosynthesis class W protein from Dictyostelium discoideum (Social amoeba).